The following is a 105-amino-acid chain: UPF0473 protein SAK_2028 (105 aa).

This sequence belongs to the UPF0473 family.

This Streptococcus agalactiae serotype Ia (strain ATCC 27591 / A909 / CDC SS700) protein is UPF0473 protein SAK_2028.